The sequence spans 491 residues: Serine/threonine-protein kinase 3 (491 aa).

Met1 is modified (N-acetylmethionine). The residue at position 15 (Ser15) is a Phosphoserine; by PLK1. The region spanning 27 to 278 is the Protein kinase domain; it reads FDVLEKLGEG…ATQLLQHPFI (252 aa). Residues 33–41 and Lys56 contribute to the ATP site; that span reads LGEGSYGSV. A Phosphothreonine; by PKB/AKT1 modification is found at Thr117. Asp146 serves as the catalytic Proton acceptor. Asn151 and Asp164 together coordinate Mg(2+). Thr174 and Thr180 each carry phosphothreonine; by autocatalysis. The stretch at 287-328 forms a coiled coil; sequence LRDLITEAMEIKAKRHEEQQRELEEEEENSDEDELDSHTMVK. A disordered region spans residues 301-327; sequence RHEEQQRELEEEEENSDEDELDSHTMV. Over residues 309–321 the composition is skewed to acidic residues; the sequence is LEEEEENSDEDEL. Ser316 carries the post-translational modification Phosphoserine. Thr336 and Thr378 each carry phosphothreonine; by autocatalysis. Residues 370–392 are disordered; that stretch reads EDEEEEDGTMKRNATSPQVQRPS. Positions 381 to 390 are enriched in polar residues; that stretch reads RNATSPQVQR. Thr384 carries the phosphothreonine; by PKB/AKT1 modification. Ser385 and Ser444 each carry phosphoserine. An SARAH domain is found at 437–484; it reads FDFLKNLSLEELQMRLKALDPMMEREIEELRQRYTAKRQPILDAMDAK. A coiled-coil region spans residues 442-475; sequence NLSLEELQMRLKALDPMMEREIEELRQRYTAKRQ.

This sequence belongs to the protein kinase superfamily. STE Ser/Thr protein kinase family. STE20 subfamily. In terms of assembly, homodimer; mediated via the coiled-coil region. Interacts with NORE1, which inhibits autoactivation. Interacts with and stabilizes SAV1. Interacts with RAF1, which prevents dimerization and phosphorylation. Interacts with RASSF1. Interacts (via SARAH domain) with isoform 1 of NEK2. Interacts with ESR1 only in the presence of SAV1. Interacts with PKB/AKT1. Forms a tripartite complex with MOBKL1B and STK38. Interacts with RASSF2 (via SARAH domain). Interacts with DLG5 (via PDZ domain 3). Interacts with LATS1; this interaction is inhibited in the presence of DLG5. Interacts with MARK3 in the presence of DLG5. Interacts with RASSF5; this interaction inhibits STK3 autoactivation through heterodimerization. Interacts (when phosphorylated) with SLMAP (via FHA domain); the interaction associates STK3 with the STRIPAK complex. It depends on Mg(2+) as a cofactor. Post-translationally, autophosphorylated on two residues Thr-174 and Thr-180, leading to activation. Phosphorylation at Thr-117 and Thr-384 by PKB/AKT1, leads to inhibition of its: cleavage, kinase activity, autophosphorylation at Thr-180, binding to RASSF1 and nuclear translocation, and increase in its binding to RAF1. Phosphorylated at Ser-15 by PLK1, leading to activation. When autophosphorylated at Thr-180, recruits STRIPAK complex and promotes PP2A-mediated dephosphorylation and inactivation of STK3. Proteolytically cleaved by caspase-3 during apoptosis. Proteolytic cleavage results in kinase activation and nuclear translocation of the truncated form (MST1/N). In terms of processing, ubiquitinated by TRIM69; leading to its redistribution to the perinuclear cytoskeleton, where it is phosphorylated by PLK1 and subsequently activated. In terms of tissue distribution, expressed at high levels in adult kidney, skeletal and placenta tissues and at very low levels in adult heart, lung and brain tissues.

The protein localises to the cytoplasm. The protein resides in the nucleus. Its subcellular location is the cytoskeleton. It is found in the microtubule organizing center. It localises to the centrosome. It catalyses the reaction L-seryl-[protein] + ATP = O-phospho-L-seryl-[protein] + ADP + H(+). It carries out the reaction L-threonyl-[protein] + ATP = O-phospho-L-threonyl-[protein] + ADP + H(+). With respect to regulation, inhibited by the C-terminal non-catalytic region. Activated by caspase-cleavage. Full activation also requires homodimerization and autophosphorylation of Thr-180, which are inhibited by the proto-oncogene product RAF1. Activated by RASSF1 which acts by preventing its dephosphorylation. When autophosphorylated at Thr-180, recruits STRIPAK complex and promotes PP2A-mediated dephosphorylation and inactivation of STK3. Functionally, stress-activated, pro-apoptotic kinase which, following caspase-cleavage, enters the nucleus and induces chromatin condensation followed by internucleosomal DNA fragmentation. Key component of the Hippo signaling pathway which plays a pivotal role in organ size control and tumor suppression by restricting proliferation and promoting apoptosis. The core of this pathway is composed of a kinase cascade wherein STK3/MST2 and STK4/MST1, in complex with its regulatory protein SAV1, phosphorylates and activates LATS1/2 in complex with its regulatory protein MOB1, which in turn phosphorylates and inactivates YAP1 oncoprotein and WWTR1/TAZ. Phosphorylation of YAP1 by LATS2 inhibits its translocation into the nucleus to regulate cellular genes important for cell proliferation, cell death, and cell migration. STK3/MST2 and STK4/MST1 are required to repress proliferation of mature hepatocytes, to prevent activation of facultative adult liver stem cells (oval cells), and to inhibit tumor formation. Phosphorylates NKX2-1. Phosphorylates NEK2 and plays a role in centrosome disjunction by regulating the localization of NEK2 to centrosome, and its ability to phosphorylate CROCC and CEP250. In conjunction with SAV1, activates the transcriptional activity of ESR1 through the modulation of its phosphorylation. Positively regulates RAF1 activation via suppression of the inhibitory phosphorylation of RAF1 on 'Ser-259'. Phosphorylates MOBKL1A and RASSF2. Phosphorylates MOBKL1B on 'Thr-74'. Acts cooperatively with MOBKL1B to activate STK38. This chain is Serine/threonine-protein kinase 3, found in Homo sapiens (Human).